The following is a 442-amino-acid chain: Ankyrin repeat and MYND domain-containing protein 2 (442 aa).

3 ANK repeats span residues 45 to 74, 79 to 108, and 159 to 188; these read NGMT…DVNC, HGYT…ETDV, and KLAG…NPLL. 8 residues coordinate Zn(2+): C320, C323, C332, C335, C341, C345, H353, and C357. Residues 320–357 form an MYND-type zinc finger; that stretch reads CTTCGEKGASKRCSVCKMVIYCDQTCQKTHWFAHKKIC. A compositionally biased stretch (basic and acidic residues) spans 401 to 421; sequence TRICQKNDNPKDSEEGEKESL. A disordered region spans residues 401 to 442; it reads TRICQKNDNPKDSEEGEKESLQSDAGLEGLQEAAVGPQVSEE.

As to quaternary structure, interacts with the retinal-specific guanylyl cyclase GC1.

It localises to the cell projection. The protein resides in the cilium. In terms of biological role, may be involved in the trafficking of signaling proteins to the cilia. The sequence is that of Ankyrin repeat and MYND domain-containing protein 2 (ANKMY2) from Bos taurus (Bovine).